Reading from the N-terminus, the 86-residue chain is Cell division topological specificity factor (86 aa).

Belongs to the MinE family.

Functionally, prevents the cell division inhibition by proteins MinC and MinD at internal division sites while permitting inhibition at polar sites. This ensures cell division at the proper site by restricting the formation of a division septum at the midpoint of the long axis of the cell. The sequence is that of Cell division topological specificity factor from Albidiferax ferrireducens (strain ATCC BAA-621 / DSM 15236 / T118) (Rhodoferax ferrireducens).